The following is a 488-amino-acid chain: Cysteine--tRNA ligase (488 aa).

Residue Cys-40 coordinates Zn(2+). The 'HIGH' region signature appears at 42-52; the sequence is MTVYDYCHIGH. Zn(2+)-binding residues include Cys-221, His-246, and Glu-250. The 'KMSKS' region motif lies at 278-282; the sequence is KMSKS. Position 281 (Lys-281) interacts with ATP.

This sequence belongs to the class-I aminoacyl-tRNA synthetase family. Monomer. Zn(2+) is required as a cofactor.

Its subcellular location is the cytoplasm. It catalyses the reaction tRNA(Cys) + L-cysteine + ATP = L-cysteinyl-tRNA(Cys) + AMP + diphosphate. This is Cysteine--tRNA ligase from Psychrobacter cryohalolentis (strain ATCC BAA-1226 / DSM 17306 / VKM B-2378 / K5).